Consider the following 896-residue polypeptide: Androgen receptor (896 aa).

Residues 1-534 (MEVQLGLGRV…PIDYYFPPQK (534 aa)) form a modulating region. An interaction with ZNF318 region spans residues 1 to 563 (MEVQLGLGRV…GSCKVFFKRA (563 aa)). Disordered regions lie at residues 35–152 (QNPG…LSLL) and 178–218 (LLQQ…YLGG). The segment covering 54–78 (LQQQQLQQQETSPRRQQQQQQQPSE) has biased composition (low complexity). Position 65 is a phosphoserine; by CDK9 (Ser-65). At Ser-81 the chain carries Phosphoserine. The segment covering 178–189 (LLQQQQQQQQQQ) has biased composition (low complexity). Polar residues predominate over residues 190-199 (EAVSEGNSSG). Tyr-215 is subject to Phosphotyrosine; by CSK. Ser-248 is modified (phosphoserine). A Phosphotyrosine; by CSK and TNK2 modification is found at Tyr-259. Tyr-299, Tyr-338, Tyr-349, and Tyr-354 each carry phosphotyrosine; by CSK. Residue Tyr-355 is modified to Phosphotyrosine; by CSK and TNK2. A Glycyl lysine isopeptide (Lys-Gly) (interchain with G-Cter in SUMO) cross-link involves residue Lys-378. At Tyr-385 the chain carries Phosphotyrosine; by CSK. Lys-497 is covalently cross-linked (Glycyl lysine isopeptide (Lys-Gly) (interchain with G-Cter in SUMO)). Tyr-511 and Tyr-528 each carry phosphotyrosine; by CSK. Positions 528 to 895 (YYFPPQKTCL…GKVKPIYFHT (368 aa)) are interaction with LPXN. The segment at residues 535 to 608 (TCLICGDEAS…AGMTLGARKL (74 aa)) is a DNA-binding region (nuclear receptor). 2 NR C4-type zinc fingers span residues 536–556 (CLIC…CGSC) and 572–596 (CASR…LRKC). The interaction with HIPK3 stretch occupies residues 548-638 (YGALTCGSCK…TEEPAQKLTV (91 aa)). The segment at 568–895 (QKYLCASRND…GKVKPIYFHT (328 aa)) is interaction with CCAR1. The interaction with KAT7 stretch occupies residues 601–895 (MTLGARKLKK…GKVKPIYFHT (295 aa)). Position 627 is a phosphoserine; by STK4/MST1 (Ser-627). An NR LBD domain is found at 645–876 (ECQPIFLNVL…DFPEMMAEII (232 aa)). 17beta-hydroxy-5alpha-androstan-3-one is bound by residues Asn-682 and Arg-729. Residues Lys-822 and Lys-824 each participate in a glycyl lysine isopeptide (Lys-Gly) (interchain with G-Cter in ubiquitin) cross-link. 17beta-hydroxy-5alpha-androstan-3-one is bound at residue Thr-854. Tyr-892 bears the Phosphotyrosine; by CSK mark.

The protein belongs to the nuclear hormone receptor family. NR3 subfamily. In terms of assembly, binds DNA as a homodimer. Part of a ternary complex containing AR, EFCAB6/DJBP and PARK7. Interacts with HIPK3 and NR0B2 in the presence of androgen. The ligand binding domain interacts with KAT7/HBO1 in the presence of dihydrotestosterone. Interacts with EFCAB6/DJBP, PQBP1, RANBP9, RBAK, SPDEF, SRA1, TGFB1I1 and RREB1. Interacts with ZMIZ1/ZIMP10 and ZMIZ2/ZMIP7 which both enhance its transactivation activity. Interacts with SLC30A9 and RAD54L2/ARIP4. Interacts with MACROD1 (via macro domain). Interacts via the ligand-binding domain with LXXLL and FXXLF motifs from NCOA1, NCOA2, NCOA3 and MAGEA11. Interacts (via nuclear receptor DNA binding domain and nuclear receptor ligand binding domain) with NCOA4. The AR N-terminal poly-Gln region binds Ran resulting in enhancement of AR-mediated transactivation. Ran-binding decreases as the poly-Gln length increases. Interacts with HIP1 (via coiled coil domain). Interacts (via ligand-binding domain) with TRIM68. Interacts with TNK2. Interacts with USP26. Interacts with RNF6. Interacts (regulated by RNF6 probably through polyubiquitination) with RNF14; regulates AR transcriptional activity. Interacts with PRMT2 and TRIM24. Interacts with RACK1. Interacts with RANBP10; this interaction enhances dihydrotestosterone-induced AR transcriptional activity. Interacts with PRPF6 in a hormone-independent way; this interaction enhances dihydrotestosterone-induced AR transcriptional activity. Interacts with STK4/MST1. Interacts with ZIPK/DAPK3. Interacts with LPXN. Interacts with MAK. Part of a complex containing AR, MAK and NCOA3. Interacts with CRY1. Interacts with CCAR1 and GATA2. Interacts with ZNF318. Interacts with BUD31. Interacts with ARID4A. Interacts with ARID4B. Interacts (via NR LBD domain) with ZBTB7A; the interaction is direct and androgen-dependent. Interacts with NCOR1. Interacts with NCOR2. Interacts with CRY2 in a ligand-dependent manner. In terms of processing, phosphorylated in prostate cancer cells in response to several growth factors including EGF. Phosphorylation is induced by c-Src kinase (CSK). Tyr-511 is one of the major phosphorylation sites and an increase in phosphorylation and Src kinase activity is associated with prostate cancer progression. Phosphorylation by TNK2 enhances the DNA-binding and transcriptional activity. Phosphorylation at Ser-65 by CDK9 regulates AR promoter selectivity and cell growth. Post-translationally, sumoylated on Lys-378 (major) and Lys-497. Ubiquitinated. Deubiquitinated by USP26. 'Lys-6' and 'Lys-27'-linked polyubiquitination by RNF6 modulates AR transcriptional activity and specificity. Palmitoylated by ZDHHC7 and ZDHHC21. Palmitoylation is required for plasma membrane targeting and for rapid intracellular signaling via ERK and AKT kinases and cAMP generation.

It is found in the nucleus. Its subcellular location is the cytoplasm. Steroid hormone receptors are ligand-activated transcription factors that regulate eukaryotic gene expression and affect cellular proliferation and differentiation in target tissues. Transcription factor activity is modulated by bound coactivator and corepressor proteins like ZBTB7A that recruits NCOR1 and NCOR2 to the androgen response elements/ARE on target genes, negatively regulating androgen receptor signaling and androgen-induced cell proliferation. Transcription activation is also down-regulated by NR0B2. Activated, but not phosphorylated, by HIPK3 and ZIPK/DAPK3. The sequence is that of Androgen receptor (AR) from Sus scrofa (Pig).